Here is a 58-residue protein sequence, read N- to C-terminus: uncharacterized protein (58 aa).

2 helical membrane passes run 5 to 25 (IAFE…IIAE) and 32 to 52 (WIVV…FKMI).

It is found in the cell membrane. This is an uncharacterized protein from Methanocaldococcus jannaschii (strain ATCC 43067 / DSM 2661 / JAL-1 / JCM 10045 / NBRC 100440) (Methanococcus jannaschii).